Reading from the N-terminus, the 964-residue chain is Protein translocase subunit SecA (964 aa).

ATP contacts are provided by residues Q86, 104–108, and D494; that span reads GEGKT. Residues 848 to 964 form a disordered region; sequence AESADTIAVA…YKMCHGQNEK (117 aa). The span at 871–882 shows a compositional bias: acidic residues; sequence AEGEVEEEDEDT. The span at 889–900 shows a compositional bias: low complexity; it reads AESAAASGAGES. Residues C947, C949, C958, and H959 each contribute to the Zn(2+) site.

It belongs to the SecA family. As to quaternary structure, monomer and homodimer. Part of the essential Sec protein translocation apparatus which comprises SecA, SecYEG and auxiliary proteins SecDF. Other proteins may also be involved. Zn(2+) serves as cofactor.

The protein localises to the cell membrane. Its subcellular location is the cytoplasm. The enzyme catalyses ATP + H2O + cellular proteinSide 1 = ADP + phosphate + cellular proteinSide 2.. Its function is as follows. Part of the Sec protein translocase complex. Interacts with the SecYEG preprotein conducting channel. Has a central role in coupling the hydrolysis of ATP to the transfer of proteins into and across the cell membrane, serving as an ATP-driven molecular motor driving the stepwise translocation of polypeptide chains across the membrane. This chain is Protein translocase subunit SecA, found in Bifidobacterium longum (strain DJO10A).